The sequence spans 791 residues: uncharacterized protein (791 aa).

The helical transmembrane segment at 10–30 (LLTITIGAVAVSSILLGGIFY) threads the bilayer. Residues 56–76 (NLDYQKARPSIKDNNLKEIPK) are compositionally biased toward basic and acidic residues. Positions 56 to 175 (NLDYQKARPS…PQPQQIPNQS (120 aa)) are disordered. The segment covering 77 to 97 (PKPQPKPEPQPTPFPDPIPTP) has biased composition (pro residues). A compositionally biased stretch (basic and acidic residues) spans 98–124 (PKKEELKKPEIKPEEPKKPEIKPEPIP). Positions 125–139 (KPKPQPIPQPTPPVE) are enriched in pro residues.

The protein to U.parvum UU044.

It localises to the membrane. This is an uncharacterized protein from Ureaplasma parvum serovar 3 (strain ATCC 700970).